The sequence spans 747 residues: Catalase-peroxidase (747 aa).

The N-terminal stretch at 1–27 is a signal peptide; sequence MRKFSVSKVALLAATMAPALLPAAARA. Residues 116–238 constitute a cross-link (tryptophyl-tyrosyl-methioninium (Trp-Tyr) (with M-264)); sequence WHSAGTYRTA…LAAVQMGLIY (123 aa). The Proton acceptor role is filled by His117. The segment at residues 238–264 is a cross-link (tryptophyl-tyrosyl-methioninium (Tyr-Met) (with W-116)); sequence YVNPEGPNGNPDPLLAAKDIRETFGRM. Residue His279 coordinates heme b.

It belongs to the peroxidase family. Peroxidase/catalase subfamily. As to quaternary structure, homodimer or homotetramer. The cofactor is heme b. In terms of processing, formation of the three residue Trp-Tyr-Met cross-link is important for the catalase, but not the peroxidase activity of the enzyme.

The catalysed reaction is H2O2 + AH2 = A + 2 H2O. It carries out the reaction 2 H2O2 = O2 + 2 H2O. Functionally, bifunctional enzyme with both catalase and broad-spectrum peroxidase activity. The sequence is that of Catalase-peroxidase from Novosphingobium aromaticivorans (strain ATCC 700278 / DSM 12444 / CCUG 56034 / CIP 105152 / NBRC 16084 / F199).